The following is a 657-amino-acid chain: Chemoreceptor McpA (657 aa).

The Cytoplasmic portion of the chain corresponds to 1–5 (MKRIR). A helical transmembrane segment spans residues 6–29 (LVDLPLIIKIGFAPAFALLMLAVM). The Periplasmic segment spans residues 30–188 (AGGAILVQKS…ESESAKRQAQ (159 aa)). The helical transmembrane segment at 189–212 (ATAAMSVTIIMSLLTLGAVGALAF) threads the bilayer. The Cytoplasmic segment spans residues 213-657 (LTVMTTRKSI…APASDGWEEF (445 aa)). HAMP domains are found at residues 216–269 (MTTR…HLEQ) and 297–349 (QEAS…ETMK). The 230-residue stretch at 354 to 583 (STDGLSTGAD…QSTAATHSLK (230 aa)) folds into the Methyl-accepting transducer domain. Gln378 carries the post-translational modification Glutamate methyl ester (Gln). Glutamate methyl ester (Glu) occurs at positions 385 and 392. Gln574 carries the glutamate methyl ester (Gln) modification. Residues 634-657 (ARPGRSSGSAALAQAPASDGWEEF) form a disordered region.

Belongs to the methyl-accepting chemotaxis (MCP) protein family.

It is found in the cell membrane. Its function is as follows. Chemotactic-signal transducers respond to changes in the concentration of attractants and repellents in the environment, transduce a signal from the outside to the inside of the cell, and facilitate sensory adaptation through the variation of the level of methylation. Attractants increase the level of methylation while repellents decrease the level of methylation. The sequence is that of Chemoreceptor McpA (mcpA) from Caulobacter vibrioides (strain ATCC 19089 / CIP 103742 / CB 15) (Caulobacter crescentus).